A 292-amino-acid polypeptide reads, in one-letter code: Peroxisomal 2,4-dienoyl-CoA reductase [(3E)-enoyl-CoA-producing] (292 aa).

Ala-2 bears the N-acetylalanine mark. NADP(+) contacts are provided by residues 35–40 (GGGSGI), 60–64 (RSLQK), and Asp-86. Arg-60 provides a ligand contact to substrate. Residue Lys-64 is modified to N6-acetyllysine. Residues Arg-88, Phe-118, and 126-128 (SFN) contribute to the substrate site. Position 151 is an N6-acetyllysine (Lys-151). NADP(+)-binding positions include Lys-182 and 208–214 (PGAISGT). A substrate-binding site is contributed by Arg-219. Position 287 is a phosphoserine (Ser-287). A Microbody targeting signal motif is present at residues 290 to 292 (AKL). An N6-acetyllysine modification is found at Lys-291.

Belongs to the short-chain dehydrogenases/reductases (SDR) family. 2,4-dienoyl-CoA reductase subfamily. In terms of assembly, monomer, dimer and oligomer.

The protein resides in the peroxisome. It catalyses the reaction a (2E,4Z)-dienoyl-CoA + NADPH + H(+) = a 4,5-saturated-(3E)-enoyl-CoA + NADP(+). It carries out the reaction a (2E,4E)-dienoyl-CoA + NADPH + H(+) = a 4,5-saturated-(3E)-enoyl-CoA + NADP(+). The enzyme catalyses (2E,4E)-hexadienoyl-CoA + NADPH + H(+) = (3E)-hexenoyl-CoA + NADP(+). The catalysed reaction is (2E,4E)-decadienoyl-CoA + NADPH + H(+) = (3E)-decenoyl-CoA + NADP(+). It catalyses the reaction (2E,4Z,7Z,10Z,13Z,16Z,19Z)-docosaheptaenoyl-CoA + NADPH + H(+) = (3E,7Z,10Z,13Z,16Z,19Z)-docosahexaenoyl-CoA + NADP(+). Auxiliary enzyme of beta-oxidation. Participates in the degradation of unsaturated fatty enoyl-CoA esters having double bonds in both even- and odd-numbered positions in peroxisome. Catalyzes the NADP-dependent reduction of 2,4-dienoyl-CoA to yield trans-3-enoyl-CoA. Has activity towards short and medium chain 2,4-dienoyl-CoAs, but also towards 2,4,7,10,13,16,19-docosaheptaenoyl-CoA, suggesting that it does not constitute a rate limiting step in the peroxisomal degradation of docosahexaenoic acid. The polypeptide is Peroxisomal 2,4-dienoyl-CoA reductase [(3E)-enoyl-CoA-producing] (Decr2) (Mus musculus (Mouse)).